We begin with the raw amino-acid sequence, 144 residues long: Histone H2B.2, sperm (144 aa).

A disordered region spans residues 1–51 (MPRSPAKTSPRKGSPRKGSPSRKASPKRGGKGAKRAGKGGRRRRVVKRRRR). 5 consecutive short sequence motifs (SPKK motif) follow at residues 4-7 (SPAK), 9-12 (SPRK), 14-17 (SPRK), 19-22 (SPSR), and 25-28 (SPKR). Phosphoserine occurs at positions 14, 19, and 25. Over residues 24-51 (ASPKRGGKGAKRAGKGGRRRRVVKRRRR) the composition is skewed to basic residues. An O-linked (GlcNAc) serine glycan is attached at Ser-131. Lys-139 is covalently cross-linked (Glycyl lysine isopeptide (Lys-Gly) (interchain with G-Cter in ubiquitin)).

The protein belongs to the histone H2B family. In terms of assembly, the nucleosome is a histone octamer containing two molecules each of H2A, H2B, H3 and H4 assembled in one H3-H4 heterotetramer and two H2A-H2B heterodimers. The octamer wraps approximately 147 bp of DNA. Post-translationally, monoubiquitination of Lys-139 gives a specific tag for epigenetic transcriptional activation and is also prerequisite for histone H3 'Lys-4' and 'Lys-79' methylation. Phosphorylated on SPKK motifs 3, 4 and 5; which may regulate DNA binding. Dephosphorylated during maturation of spermatids to mature sperm and rephosphorylated at fertilization.

It is found in the nucleus. Its subcellular location is the chromosome. Functionally, core component of nucleosome. Nucleosomes wrap and compact DNA into chromatin, limiting DNA accessibility to the cellular machineries which require DNA as a template. Histones thereby play a central role in transcription regulation, DNA repair, DNA replication and chromosomal stability. DNA accessibility is regulated via a complex set of post-translational modifications of histones, also called histone code, and nucleosome remodeling. In Parechinus angulosus (Angulate sea urchin), this protein is Histone H2B.2, sperm.